Consider the following 130-residue polypeptide: Small ribosomal subunit protein bS6 (130 aa).

Residues 99–130 (ASPMVKAKDERRERHDFASEANDDSEAGDSEE) are disordered. Residues 104 to 116 (KAKDERRERHDFA) are compositionally biased toward basic and acidic residues. Residues 119–130 (ANDDSEAGDSEE) are compositionally biased toward acidic residues.

Belongs to the bacterial ribosomal protein bS6 family.

Its function is as follows. Binds together with bS18 to 16S ribosomal RNA. The chain is Small ribosomal subunit protein bS6 from Yersinia enterocolitica serotype O:8 / biotype 1B (strain NCTC 13174 / 8081).